A 178-amino-acid polypeptide reads, in one-letter code: 6,7-dimethyl-8-ribityllumazine synthase (178 aa).

Residues phenylalanine 23, 61–63, and 85–87 each bind 5-amino-6-(D-ribitylamino)uracil; these read SFE and AVI. (2S)-2-hydroxy-3-oxobutyl phosphate is bound at residue 90-91; it reads QT. Catalysis depends on histidine 93, which acts as the Proton donor. Residue tyrosine 118 coordinates 5-amino-6-(D-ribitylamino)uracil. Position 132 (arginine 132) interacts with (2S)-2-hydroxy-3-oxobutyl phosphate.

This sequence belongs to the DMRL synthase family.

It carries out the reaction (2S)-2-hydroxy-3-oxobutyl phosphate + 5-amino-6-(D-ribitylamino)uracil = 6,7-dimethyl-8-(1-D-ribityl)lumazine + phosphate + 2 H2O + H(+). The protein operates within cofactor biosynthesis; riboflavin biosynthesis; riboflavin from 2-hydroxy-3-oxobutyl phosphate and 5-amino-6-(D-ribitylamino)uracil: step 1/2. Catalyzes the formation of 6,7-dimethyl-8-ribityllumazine by condensation of 5-amino-6-(D-ribitylamino)uracil with 3,4-dihydroxy-2-butanone 4-phosphate. This is the penultimate step in the biosynthesis of riboflavin. This is 6,7-dimethyl-8-ribityllumazine synthase from Thermosynechococcus vestitus (strain NIES-2133 / IAM M-273 / BP-1).